The chain runs to 1003 residues: Glycine--tRNA ligase (1003 aa).

The glycine--tRNA ligase alpha subunit stretch occupies residues 1 to 310 (MSSQPLTLQD…VTAKQIPHIC (310 aa)). The tract at residues 311-1003 (QDEDFLLEIG…CFGFYAWDAL (693 aa)) is glycine--tRNA ligase beta subunit.

It belongs to the class-II aminoacyl-tRNA synthetase family.

Its subcellular location is the cytoplasm. The enzyme catalyses tRNA(Gly) + glycine + ATP = glycyl-tRNA(Gly) + AMP + diphosphate. In Chlamydia muridarum (strain MoPn / Nigg), this protein is Glycine--tRNA ligase (glyQS).